We begin with the raw amino-acid sequence, 272 residues long: Phosphoglycolate phosphatase (272 aa).

The active-site Nucleophile is the D19. Residues D19, D21, and D182 each contribute to the Mg(2+) site.

The protein belongs to the HAD-like hydrolase superfamily. CbbY/CbbZ/Gph/YieH family. It depends on Mg(2+) as a cofactor.

It catalyses the reaction 2-phosphoglycolate + H2O = glycolate + phosphate. It participates in organic acid metabolism; glycolate biosynthesis; glycolate from 2-phosphoglycolate: step 1/1. Its function is as follows. Specifically catalyzes the dephosphorylation of 2-phosphoglycolate. Is involved in the dissimilation of the intracellular 2-phosphoglycolate formed during the DNA repair of 3'-phosphoglycolate ends, a major class of DNA lesions induced by oxidative stress. In Pseudomonas syringae pv. syringae (strain B728a), this protein is Phosphoglycolate phosphatase.